The sequence spans 97 residues: Aspartyl/glutamyl-tRNA(Asn/Gln) amidotransferase subunit C (97 aa).

Residues 59–78 (STGKLRPDEPAQPLSRDDAL) form a disordered region. Residues 63–78 (LRPDEPAQPLSRDDAL) show a composition bias toward basic and acidic residues.

Belongs to the GatC family. In terms of assembly, heterotrimer of A, B and C subunits.

It catalyses the reaction L-glutamyl-tRNA(Gln) + L-glutamine + ATP + H2O = L-glutaminyl-tRNA(Gln) + L-glutamate + ADP + phosphate + H(+). The enzyme catalyses L-aspartyl-tRNA(Asn) + L-glutamine + ATP + H2O = L-asparaginyl-tRNA(Asn) + L-glutamate + ADP + phosphate + 2 H(+). In terms of biological role, allows the formation of correctly charged Asn-tRNA(Asn) or Gln-tRNA(Gln) through the transamidation of misacylated Asp-tRNA(Asn) or Glu-tRNA(Gln) in organisms which lack either or both of asparaginyl-tRNA or glutaminyl-tRNA synthetases. The reaction takes place in the presence of glutamine and ATP through an activated phospho-Asp-tRNA(Asn) or phospho-Glu-tRNA(Gln). The polypeptide is Aspartyl/glutamyl-tRNA(Asn/Gln) amidotransferase subunit C (Metallosphaera sedula (strain ATCC 51363 / DSM 5348 / JCM 9185 / NBRC 15509 / TH2)).